We begin with the raw amino-acid sequence, 321 residues long: Non-canonical heme oxygenase HOZ, chloroplastic (321 aa).

A chloroplast-targeting transit peptide spans 1–45; sequence MKSLVAHFSTPLITARLVPRCIIHRASISAVSFSTVRRRFSPLTM. The segment at 96–116 is dimerization; that stretch reads CGMLSTFSQKYEGYPSGSMVD. 3 residues coordinate heme b: Ser130, Val134, and His135. Dimerization stretches follow at residues 144 to 166 and 205 to 208; these read KCSLLIARDPEDRTGLRITLHGD and KVVR.

In terms of assembly, homodimer. Binds to heme in the interdimer interface; the heme iron is coordinated by a fixed water molecule.

It is found in the plastid. It localises to the chloroplast. Dimeric beta-barrel protein binding to heme and catalyzing its degradation to produce biliverdin. May function in the tetrapyrrole biosynthetic pathway. The sequence is that of Non-canonical heme oxygenase HOZ, chloroplastic from Arabidopsis thaliana (Mouse-ear cress).